The following is a 27-amino-acid chain: Dermaseptin-S4 (27 aa).

Belongs to the frog skin active peptide (FSAP) family. Dermaseptin subfamily. In terms of assembly, monomer and oligomer. Forms aggregates in aqueous environments. Expressed by the skin glands.

The protein localises to the secreted. Potent antimicrobial peptide with activity against bacteria and protozoa. Also has activity against fungi. Also shows activity against enveloped herpes simplex virus type 1. Probably acts by disturbing membrane functions with its amphipathic structure. Binds to healthy erythrocytes (this binding is receptor independent), and has strong hemolytic activity. Does not bind to P.falciparum infected erythrocytes, but accumulates within the parasite. Kills the parasite, and only at high concentrations has a hemolytic activity on the host cell. In vitro, shows high spermicidal activities. This chain is Dermaseptin-S4, found in Phyllomedusa sauvagei (Sauvage's leaf frog).